A 209-amino-acid polypeptide reads, in one-letter code: Uracil phosphoribosyltransferase (209 aa).

Residues arginine 79, arginine 104, and 131–139 (DPLLATGNS) contribute to the 5-phospho-alpha-D-ribose 1-diphosphate site. Uracil-binding positions include isoleucine 194 and 199 to 201 (GDA). Aspartate 200 contributes to the 5-phospho-alpha-D-ribose 1-diphosphate binding site.

It belongs to the UPRTase family. Mg(2+) serves as cofactor.

It carries out the reaction UMP + diphosphate = 5-phospho-alpha-D-ribose 1-diphosphate + uracil. It participates in pyrimidine metabolism; UMP biosynthesis via salvage pathway; UMP from uracil: step 1/1. Its activity is regulated as follows. Allosterically activated by GTP. Its function is as follows. Catalyzes the conversion of uracil and 5-phospho-alpha-D-ribose 1-diphosphate (PRPP) to UMP and diphosphate. The polypeptide is Uracil phosphoribosyltransferase (Rhodococcus opacus (strain B4)).